Here is a 274-residue protein sequence, read N- to C-terminus: Large ribosomal subunit protein uL2c (274 aa).

Residues 224 to 274 (NPVDHPHGGGEGRAPIGRKKPTTPWGYPALGRKSRKRNKYSEKFILRHRSK) form a disordered region.

Belongs to the universal ribosomal protein uL2 family. Part of the 50S ribosomal subunit.

The protein resides in the plastid. Its subcellular location is the chloroplast. This is Large ribosomal subunit protein uL2c (rpl2) from Ipomoea purpurea (Common morning glory).